We begin with the raw amino-acid sequence, 192 residues long: Signal peptidase complex catalytic subunit SEC11C (192 aa).

Residues methionine 1–arginine 28 are Cytoplasmic-facing. A helical; Signal-anchor for type II membrane protein transmembrane segment spans residues glutamine 29–tryptophan 48. Over lysine 49–serine 192 the chain is Lumenal. Catalysis depends on charge relay system residues serine 68, histidine 108, and aspartate 134. Residues alanine 177–leucine 188 form a C-terminal short (CTS) helix region.

The protein belongs to the peptidase S26B family. In terms of assembly, component of the signal peptidase complex paralog C (SPC-C) composed of a catalytic subunit SEC11C and three accessory subunits SPCS1, SPCS2 and SPCS3. Within the complex, interacts with SPCS2 and SPCS3. The complex induces a local thinning of the ER membrane which is used to measure the length of the signal peptide (SP) h-region of protein substrates. This ensures the selectivity of the complex towards h-regions shorter than 18-20 amino acids. May undergo processing at the N-terminus.

It is found in the endoplasmic reticulum membrane. The catalysed reaction is Cleavage of hydrophobic, N-terminal signal or leader sequences from secreted and periplasmic proteins.. In terms of biological role, catalytic component of the signal peptidase complex (SPC) which catalyzes the cleavage of N-terminal signal sequences from nascent proteins as they are translocated into the lumen of the endoplasmic reticulum. Specifically cleaves N-terminal signal peptides that contain a hydrophobic alpha-helix (h-region) shorter than 18-20 amino acids. In Rattus norvegicus (Rat), this protein is Signal peptidase complex catalytic subunit SEC11C (Sec11c).